Reading from the N-terminus, the 450-residue chain is Glucose-6-phosphate isomerase (450 aa).

Glutamate 291 serves as the catalytic Proton donor. Active-site residues include histidine 312 and lysine 426.

The protein belongs to the GPI family.

The protein localises to the cytoplasm. The enzyme catalyses alpha-D-glucose 6-phosphate = beta-D-fructose 6-phosphate. Its pathway is carbohydrate biosynthesis; gluconeogenesis. It participates in carbohydrate degradation; glycolysis; D-glyceraldehyde 3-phosphate and glycerone phosphate from D-glucose: step 2/4. Catalyzes the reversible isomerization of glucose-6-phosphate to fructose-6-phosphate. This chain is Glucose-6-phosphate isomerase, found in Clostridium botulinum (strain Loch Maree / Type A3).